A 274-amino-acid polypeptide reads, in one-letter code: Putative pyruvate, phosphate dikinase regulatory protein (274 aa).

153–160 (GISRTSKT) provides a ligand contact to ADP.

It belongs to the pyruvate, phosphate/water dikinase regulatory protein family. PDRP subfamily.

The enzyme catalyses N(tele)-phospho-L-histidyl/L-threonyl-[pyruvate, phosphate dikinase] + ADP = N(tele)-phospho-L-histidyl/O-phospho-L-threonyl-[pyruvate, phosphate dikinase] + AMP + H(+). The catalysed reaction is N(tele)-phospho-L-histidyl/O-phospho-L-threonyl-[pyruvate, phosphate dikinase] + phosphate + H(+) = N(tele)-phospho-L-histidyl/L-threonyl-[pyruvate, phosphate dikinase] + diphosphate. Its function is as follows. Bifunctional serine/threonine kinase and phosphorylase involved in the regulation of the pyruvate, phosphate dikinase (PPDK) by catalyzing its phosphorylation/dephosphorylation. The protein is Putative pyruvate, phosphate dikinase regulatory protein of Bartonella tribocorum (strain CIP 105476 / IBS 506).